The following is a 91-amino-acid chain: CRISPR-associated endoribonuclease Cas2 (91 aa).

A Mg(2+)-binding site is contributed by D14.

This sequence belongs to the CRISPR-associated endoribonuclease Cas2 protein family. Homodimer, forms a heterotetramer with a Cas1 homodimer. Mg(2+) is required as a cofactor.

Its function is as follows. CRISPR (clustered regularly interspaced short palindromic repeat), is an adaptive immune system that provides protection against mobile genetic elements (viruses, transposable elements and conjugative plasmids). CRISPR clusters contain sequences complementary to antecedent mobile elements and target invading nucleic acids. CRISPR clusters are transcribed and processed into CRISPR RNA (crRNA). Functions as a ssRNA-specific endoribonuclease. Involved in the integration of spacer DNA into the CRISPR cassette. The protein is CRISPR-associated endoribonuclease Cas2 of Nanoarchaeum equitans (strain Kin4-M).